Here is a 234-residue protein sequence, read N- to C-terminus: 2-amino-5-formylamino-6-ribosylaminopyrimidin-4(3H)-one 5'-monophosphate deformylase (234 aa).

4 residues coordinate Fe cation: Glu30, His32, Asp41, and His111.

The protein belongs to the creatininase superfamily. FAPy deformylase family. Homodimer. Requires Fe(2+) as cofactor. The cofactor is Zn(2+).

The catalysed reaction is 2-amino-5-formylamino-6-(5-phospho-D-ribosylamino)pyrimidin-4(3H)-one + H2O = 2,5-diamino-6-(1-D-ribosylamino)pyrimidin-4(3H)-one 5'-phosphate + formate + H(+). Its pathway is cofactor biosynthesis; coenzyme F420 biosynthesis. The protein operates within cofactor biosynthesis; riboflavin biosynthesis. In terms of biological role, catalyzes the hydrolysis of the formamide of 2-amino-5-formylamino-6-ribosylamino-4(3H)-pyrimidinone 5'-monophosphate (FAPy) to form 2,5-diamino-6-ribosylamino-4(3H)-pyrimidinone 5'-phosphate (APy). In Methanothermobacter thermautotrophicus (strain ATCC 29096 / DSM 1053 / JCM 10044 / NBRC 100330 / Delta H) (Methanobacterium thermoautotrophicum), this protein is 2-amino-5-formylamino-6-ribosylaminopyrimidin-4(3H)-one 5'-monophosphate deformylase.